Here is a 491-residue protein sequence, read N- to C-terminus: Fibrinogen beta chain (491 aa).

An N-terminal signal peptide occupies residues 1 to 30 (MKRMVSWSFHKLKTMKHLLLLLLCVFLVKS). Gln31 carries the post-translational modification Pyrrolidone carboxylic acid. The tract at residues 44–75 (RGHRPLDKKREEAPSLRPAPPPISGGGYRARP) is disordered. Residues 45 to 47 (GHR) are beta-chain polymerization, binding distal domain of another fibrin. Residues 47 to 57 (RPLDKKREEAP) are compositionally biased toward basic and acidic residues. Positions 157–222 (KRQKQVKDNE…ESDVSAQMEY (66 aa)) form a coiled coil. Disulfide bonds link Cys231/Cys316 and Cys241/Cys270. In terms of domain architecture, Fibrinogen C-terminal spans 232–488 (NIPVVSGKEC…KMSMKIRPFF (257 aa)). Asn394 carries N-linked (GlcNAc...) asparagine glycosylation. Cysteines 424 and 437 form a disulfide.

In terms of assembly, heterohexamer; disulfide linked. Contains 2 sets of 3 non-identical chains (alpha, beta and gamma). The 2 heterotrimers are in head to head conformation with the N-termini in a small central domain. Post-translationally, conversion of fibrinogen to fibrin is triggered by thrombin, which cleaves fibrinopeptides A and B from alpha and beta chains, and thus exposes the N-terminal polymerization sites responsible for the formation of the soft clot. The soft clot is converted into the hard clot by factor XIIIA which catalyzes the epsilon-(gamma-glutamyl)lysine cross-linking between gamma chains (stronger) and between alpha chains (weaker) of different monomers. As to expression, detected in blood plasma (at protein level).

It localises to the secreted. Its function is as follows. Cleaved by the protease thrombin to yield monomers which, together with fibrinogen alpha (FGA) and fibrinogen gamma (FGG), polymerize to form an insoluble fibrin matrix. Fibrin has a major function in hemostasis as one of the primary components of blood clots. In addition, functions during the early stages of wound repair to stabilize the lesion and guide cell migration during re-epithelialization. Was originally thought to be essential for platelet aggregation, based on in vitro studies using anticoagulated blood. However subsequent studies have shown that it is not absolutely required for thrombus formation in vivo. Enhances expression of SELP in activated platelets. Maternal fibrinogen is essential for successful pregnancy. Fibrin deposition is also associated with infection, where it protects against IFNG-mediated hemorrhage. May also facilitate the antibacterial immune response via both innate and T-cell mediated pathways. In Homo sapiens (Human), this protein is Fibrinogen beta chain (FGB).